We begin with the raw amino-acid sequence, 563 residues long: MDFKQQVVTALTGVLGDSLPAEKVAQLIETPKTSDLGDYAFPTFILAKTLRKAPQQIAQDLVDQMDVAGFEKVIANGPYINFFLDKAAFSDQILKTVLTEAAKYGESDLGHGGNVPIDMSSPNIAKPISMGHLRSTVIGNSIAKILTKVGFNPIKINHLGDWGTQFGKLIVAYKKWGSEEEVKEDPITNLLKYYVKFHQEDVEHPELDDEARAWFRKLEAGDEEATQLWSWFRSESLKEFQKIYDMLGVEFDSYNGEAFYNDKMDAVVEAIESKGLLQESRGAEIVDLTAYNLNPALIKKSDGATLYMTRDLAAAMYRHDTYNFVQSLYVVGGEQREHFNQLKAVLKEMGNDWSDEIHHIPFGLITQGGKKLSTRSGRVILLEEVLNDAVKLAGAQIEAKNPDLPNREEVAKQVGIGAVIFHDLKNDRLDNFDFDLEEVVRFEGETGPYVQYTNARAQSILRKANQEVVVDDQLVVADDNAWDVLKMLSNFPAVIARASKEYEPSIVAKYALRLAKAFNKYYANSKILADDDQRNARLSLVKSVSIVLETALDLLGVQAPKEM.

A 'HIGH' region motif is present at residues 122–132 (PNIAKPISMGH).

This sequence belongs to the class-I aminoacyl-tRNA synthetase family. In terms of assembly, monomer.

It localises to the cytoplasm. It catalyses the reaction tRNA(Arg) + L-arginine + ATP = L-arginyl-tRNA(Arg) + AMP + diphosphate. The chain is Arginine--tRNA ligase from Latilactobacillus sakei subsp. sakei (strain 23K) (Lactobacillus sakei subsp. sakei).